The following is a 104-amino-acid chain: uncharacterized protein (104 aa).

This is an uncharacterized protein from Homo sapiens (Human).